We begin with the raw amino-acid sequence, 175 residues long: ATP synthase subunit delta (175 aa).

Belongs to the ATPase delta chain family. F-type ATPases have 2 components, F(1) - the catalytic core - and F(0) - the membrane proton channel. F(1) has five subunits: alpha(3), beta(3), gamma(1), delta(1), epsilon(1). F(0) has three main subunits: a(1), b(2) and c(10-14). The alpha and beta chains form an alternating ring which encloses part of the gamma chain. F(1) is attached to F(0) by a central stalk formed by the gamma and epsilon chains, while a peripheral stalk is formed by the delta and b chains.

It is found in the cell membrane. In terms of biological role, f(1)F(0) ATP synthase produces ATP from ADP in the presence of a proton or sodium gradient. F-type ATPases consist of two structural domains, F(1) containing the extramembraneous catalytic core and F(0) containing the membrane proton channel, linked together by a central stalk and a peripheral stalk. During catalysis, ATP synthesis in the catalytic domain of F(1) is coupled via a rotary mechanism of the central stalk subunits to proton translocation. Its function is as follows. This protein is part of the stalk that links CF(0) to CF(1). It either transmits conformational changes from CF(0) to CF(1) or is implicated in proton conduction. In Lactococcus lactis subsp. cremoris (strain MG1363), this protein is ATP synthase subunit delta.